The primary structure comprises 116 residues: Pol polyprotein (116 aa).

Its function is as follows. Catalyzes viral DNA integration into the host chromosome, by performing a series of DNA cutting and joining reactions. This is Pol polyprotein (pol) from Mus musculus (Mouse).